The primary structure comprises 283 residues: Protein boule-like (283 aa).

A disordered region spans residues 1–25 (MQTDSLSPSPNPVSPVPLNNPTSAP). The RRM domain occupies 33 to 110 (NRIFVGGIDF…KKLNIGPAIR (78 aa)). The DAZ domain occupies 160–184 (PSRSVCSSPVMVAQPIYQQPAYHYQ).

It belongs to the RRM DAZ family. Interacts with DAZ1 and DAZL.

It is found in the cytoplasm. Probable RNA-binding protein, which may be required during spermatogenesis. May act by binding to the 3'-UTR of mRNAs and regulating their translation. In Macaca fascicularis (Crab-eating macaque), this protein is Protein boule-like (BOLL).